The following is a 1614-amino-acid chain: Protein scribble homolog (1614 aa).

The interval 1-809 (MLKCIPLWRC…MRLWRERMVE (809 aa)) is sufficient for targeting to adherens junction and to inhibit cell proliferation. 17 LRR repeats span residues 11-34 (NRHV…IYRY), 35-58 (SRSL…FFRL), 59-81 (LNLR…VANF), 83-105 (QLVE…KFCK), 107-127 (LEIA…FTQL), 128-150 (RSLA…VGNL), 151-173 (ANLV…LSFL), 174-196 (VKLE…LGAL), 197-219 (PNLR…LGNL), 221-242 (RLVC…LGGL), 243-265 (LLLT…IGQL), 267-288 (QLSI…IGDC), 289-311 (ENLS…LGKL), 312-334 (TKLT…IGGC), 336-357 (ALSV…LAHT), 359-380 (ELHV…LTHL), and 382-405 (LKAL…DDAQ). At Ser-37 the chain carries Phosphoserine. Phosphothreonine is present on Thr-378. Disordered stretches follow at residues 417–441 (PQQP…SDAP), 462–608 (GAAA…RLIR), and 636–692 (AQPD…VVSA). Residues 428 to 437 (GLQSSPSESW) show a composition bias toward polar residues. Thr-475 is subject to Phosphothreonine. Residues 479–494 (SELKVMKRGVEERRGE) are compositionally biased toward basic and acidic residues. A compositionally biased stretch (polar residues) spans 516-533 (TESGLSEDSQPSTGTASQ). A compositionally biased stretch (low complexity) spans 548–557 (QQEAAPNAQE). Over residues 662 to 686 (EEEDEEDEEEDEEEEEVAVAEEDKE) the composition is skewed to acidic residues. Residues 664-691 (EDEEDEEEDEEEEEVAVAEEDKEEAVVS) are a coiled coil. A phosphoserine mark is found at Ser-699 and Ser-755. Residues 708–1219 (IEPARIEEEE…SLESVSSIDR (512 aa)) form an interaction with ARHGEF7 region. One can recognise a PDZ 1 domain in the interval 719–806 (TLTIVRQTGG…TVQMRLWRER (88 aa)). Residues 719-1184 (TLTIVRQTGG…TVLVCDGFDT (466 aa)) form a required for interaction with VIM region. At Thr-817 the chain carries Phosphothreonine. Ser-826, Ser-866, and Ser-930 each carry phosphoserine. Positions 853 to 941 (VACLVRSEKG…TIALLLEREA (89 aa)) constitute a PDZ 2 domain. Residues 940–971 (EAGGPLPPSPLPHSPPPPVTAPSTVVTASPGE) are disordered. The span at 944-959 (PLPPSPLPHSPPPPVT) shows a compositional bias: pro residues. Over residues 960–969 (APSTVVTASP) the composition is skewed to low complexity. PDZ domains are found at residues 994-1083 (EICL…RRDP) and 1090-1178 (ELCI…TVLV). Phosphoserine is present on residues Ser-1130, Ser-1210, Ser-1213, Ser-1216, Ser-1222, Ser-1260, Ser-1268, and Ser-1271. A disordered region spans residues 1214–1448 (VSSIDRELSP…LPDRALSPAE (235 aa)). Over residues 1217–1232 (IDRELSPEGCGKEKEP) the composition is skewed to basic and acidic residues. Thr-1304 is modified (phosphothreonine). Ser-1310 carries the post-translational modification Phosphoserine. Residues 1315 to 1327 (SFRERQKYFELEV) show a composition bias toward basic and acidic residues. Ser-1340 bears the Phosphoserine mark. Residues 1341-1368 (LVGADDLRKMQEEEARKLQQKRAQLMRE) adopt a coiled-coil conformation. The segment covering 1345-1357 (DDLRKMQEEEARK) has biased composition (basic and acidic residues). The segment covering 1378–1390 (LDGEAPDDEEPEE) has biased composition (acidic residues). The span at 1396 to 1408 (GPAAGLSPSSPQP) shows a compositional bias: low complexity. Residues Ser-1402 and Ser-1405 each carry the phosphoserine modification. Over residues 1418 to 1429 (AKAERRHQERLR) the composition is skewed to basic and acidic residues. Phosphoserine occurs at positions 1432, 1445, and 1467. The disordered stretch occupies residues 1476-1524 (QMVLSKSQEGRSRRGPLERLAEAPSPAPTPSPTPVEDLGLQTSTSPGRL). Over residues 1483–1496 (QEGRSRRGPLERLA) the composition is skewed to basic and acidic residues. Residue Ser-1500 is modified to Phosphoserine. A Phosphothreonine modification is found at Thr-1504. Ser-1506, Ser-1520, and Ser-1550 each carry phosphoserine. Positions 1581-1614 (GRPSPGTVGPEEVTLCSSRRPVRPGRRGLGPVPS) are disordered.

The protein belongs to the LAP (LRR and PDZ) protein family. As to quaternary structure, interacts with UBE3A. Interacts with PAK1 and PAK2. Interacts (via PDZ domains) with VANGL2. Interacts (via PDZ domains) with LPP and TRIP6; the interaction is direct. Interacts (via PDZ domains) with TJP2. Interacts (via PDZ domains) with APC; may mediate APC targeting to adherens junctions of epithelial cells. Interacts (via PDZ domains) with TSHR; regulates TSHR trafficking and function. Interacts with ARHGEF7 and GIT1; interacts directly with ARHGEF7. Interacts with CTNNB1. Interacts with MAPK12. Interacts (via PDZ domains 1 and 3) with MCC. Interacts with DLG5. Interacts with STK4/MST1 and LATS1 in the presence of DLG5. Interacts (via PDZ domain 3) with CRTAM (via PDZ-binding motif); the interaction promotes CRTAM and SCRIB polarization in a subset of CD4+ T-cells. Interacts with YES1, when YES1 is in a closed conformation; the interaction facilitates YES1 autophosphorylation. Interacts (via PDZ domains) with VIM; the interaction protects SCRIB from proteasomal degradation and facilitates SCRIB localization to intermediate filaments, the interaction is reduced by cell contact inhibition. Post-translationally, ubiquitinated; targeted for UBE3A-dependent multiubiquitination and degraded. In terms of processing, palmitoylated. Could be depalmitoylated by LYPLA1 and/or LYPLA2. Palmitoylation of SCRIB by ZDHHC7 is required for its localization to cell-cell junctions, function in the establishement of epithelial cell polarity and the regulation of downstream signaling pathways important for epithelial cell differentiation.

The protein localises to the cell membrane. It localises to the cell junction. It is found in the adherens junction. The protein resides in the cell projection. Its subcellular location is the lamellipodium. The protein localises to the cytoplasm. It localises to the postsynapse. It is found in the presynapse. Functionally, scaffold protein involved in different aspects of polarized cell differentiation regulating epithelial and neuronal morphogenesis and T-cell polarization. Via its interaction with CRTAM, required for the late phase polarization of a subset of CD4+ T-cells, which in turn regulates TCR-mediated proliferation and IFNG and IL22 production. Plays a role in cell directional movement, cell orientation, cell sheet organization and Golgi complex polarization at the cell migration front. Promotes epithelial cell layer barrier function via maintaining cell-cell adhesion. Most probably functions in the establishment of apico-basal cell polarity. May function in cell proliferation regulating progression from G1 to S phase and as a positive regulator of apoptosis for instance during acinar morphogenesis of the mammary epithelium. May regulate cell invasion via MAPK-mediated cell migration and adhesion. May play a role in exocytosis and in the targeting of synaptic vesicles to synapses. Functions as an activator of Rac GTPase activity. In Canis lupus familiaris (Dog), this protein is Protein scribble homolog.